Reading from the N-terminus, the 132-residue chain is uncharacterized protein (132 aa).

Helical transmembrane passes span 7 to 29 (LALLSFFLGLGSFFSFYVAPTLF), 44 to 62 (VFPVYFGLGIILVGISLFL), 69 to 88 (LFLSLGILNLLLLLLQEFIV), and 108 to 130 (GVSMGINLAILLLTLGKVLILIF).

It is found in the cell membrane. This is an uncharacterized protein from Aquifex aeolicus (strain VF5).